The sequence spans 217 residues: Adenylate kinase (217 aa).

An ATP-binding site is contributed by 10–15 (GAGKGT). The segment at 30-59 (STGDIFRANIKNNTELGAKAKEYMDQGLLV) is NMP. AMP contacts are provided by residues Thr-31, Arg-36, 57-59 (LLV), 85-88 (GFPR), and Gln-92. The LID stretch occupies residues 126–163 (GRRACVSCGGTYHVVFTPTKKEGICDACGGELTIRDDD). Residue Arg-127 participates in ATP binding. Zn(2+) is bound by residues Cys-130 and Cys-133. Residue 136 to 137 (TY) participates in ATP binding. Zn(2+) is bound by residues Cys-150 and Cys-153. Residues Arg-160 and Arg-171 each coordinate AMP. Position 199 (Lys-199) interacts with ATP.

The protein belongs to the adenylate kinase family. In terms of assembly, monomer.

Its subcellular location is the cytoplasm. The enzyme catalyses AMP + ATP = 2 ADP. Its pathway is purine metabolism; AMP biosynthesis via salvage pathway; AMP from ADP: step 1/1. Catalyzes the reversible transfer of the terminal phosphate group between ATP and AMP. Plays an important role in cellular energy homeostasis and in adenine nucleotide metabolism. This Lachnoclostridium phytofermentans (strain ATCC 700394 / DSM 18823 / ISDg) (Clostridium phytofermentans) protein is Adenylate kinase.